A 303-amino-acid polypeptide reads, in one-letter code: Glutaminase (303 aa).

7 residues coordinate substrate: serine 63, asparagine 113, glutamate 157, asparagine 164, tyrosine 188, tyrosine 239, and valine 257.

This sequence belongs to the glutaminase family. As to quaternary structure, homotetramer.

It catalyses the reaction L-glutamine + H2O = L-glutamate + NH4(+). The polypeptide is Glutaminase (Saccharopolyspora erythraea (strain ATCC 11635 / DSM 40517 / JCM 4748 / NBRC 13426 / NCIMB 8594 / NRRL 2338)).